Reading from the N-terminus, the 450-residue chain is Phosphoglucosamine mutase (450 aa).

Ser102 acts as the Phosphoserine intermediate in catalysis. The Mg(2+) site is built by Ser102, Asp243, Asp245, and Asp247. Ser102 carries the post-translational modification Phosphoserine.

The protein belongs to the phosphohexose mutase family. Mg(2+) serves as cofactor. In terms of processing, activated by phosphorylation.

The catalysed reaction is alpha-D-glucosamine 1-phosphate = D-glucosamine 6-phosphate. Catalyzes the conversion of glucosamine-6-phosphate to glucosamine-1-phosphate. This is Phosphoglucosamine mutase from Mesorhizobium japonicum (strain LMG 29417 / CECT 9101 / MAFF 303099) (Mesorhizobium loti (strain MAFF 303099)).